A 197-amino-acid chain; its full sequence is MEKQHSLIFLTGFSGSGKSSIGPLLANSLGYDFIDIDSAIEEQEGKTITRIFAEEGERAFRKLEQAMIATIAERKEMVASLGGGALEHTPTFELISTTGTLVYLKSDPKNLAKRLFHKTDRPLLRSSGTEKPDREALERNISAILEKRSPRYESAAITVYTDQKRIGSTVEELTRKIERFVRKQSSIEQNDQHKDRP.

15–20 provides a ligand contact to ATP; it reads GSGKSS. Position 19 (Ser-19) interacts with Mg(2+). Residues Asp-37, Arg-61, and Gly-83 each coordinate substrate. ATP is bound at residue Arg-121. Substrate is bound at residue Arg-148.

The protein belongs to the shikimate kinase family. In terms of assembly, monomer. It depends on Mg(2+) as a cofactor.

Its subcellular location is the cytoplasm. The catalysed reaction is shikimate + ATP = 3-phosphoshikimate + ADP + H(+). Its pathway is metabolic intermediate biosynthesis; chorismate biosynthesis; chorismate from D-erythrose 4-phosphate and phosphoenolpyruvate: step 5/7. Its function is as follows. Catalyzes the specific phosphorylation of the 3-hydroxyl group of shikimic acid using ATP as a cosubstrate. This chain is Shikimate kinase, found in Chlorobium phaeovibrioides (strain DSM 265 / 1930) (Prosthecochloris vibrioformis (strain DSM 265)).